The chain runs to 883 residues: Alanine--tRNA ligase (883 aa).

Zn(2+) contacts are provided by His563, His567, Cys677, and His681.

It belongs to the class-II aminoacyl-tRNA synthetase family. It depends on Zn(2+) as a cofactor.

Its subcellular location is the cytoplasm. It catalyses the reaction tRNA(Ala) + L-alanine + ATP = L-alanyl-tRNA(Ala) + AMP + diphosphate. Functionally, catalyzes the attachment of alanine to tRNA(Ala) in a two-step reaction: alanine is first activated by ATP to form Ala-AMP and then transferred to the acceptor end of tRNA(Ala). Also edits incorrectly charged Ser-tRNA(Ala) and Gly-tRNA(Ala) via its editing domain. The sequence is that of Alanine--tRNA ligase from Cereibacter sphaeroides (strain ATCC 17023 / DSM 158 / JCM 6121 / CCUG 31486 / LMG 2827 / NBRC 12203 / NCIMB 8253 / ATH 2.4.1.) (Rhodobacter sphaeroides).